Consider the following 74-residue polypeptide: Ubiquitin-like protein FUBI (74 aa).

It belongs to the ubiquitin family.

This chain is Ubiquitin-like protein FUBI (FAU), found in Pongo abelii (Sumatran orangutan).